The chain runs to 430 residues: NADH-quinone oxidoreductase subunit D 1 (430 aa).

The tract at residues 1–36 (MSEAKGVGGIDPRATPGSAGAGERPPMGTVSRAGDG) is disordered.

It belongs to the complex I 49 kDa subunit family. In terms of assembly, NDH-1 is composed of 14 different subunits. Subunits NuoB, C, D, E, F, and G constitute the peripheral sector of the complex.

The protein resides in the cell inner membrane. The enzyme catalyses a quinone + NADH + 5 H(+)(in) = a quinol + NAD(+) + 4 H(+)(out). Its function is as follows. NDH-1 shuttles electrons from NADH, via FMN and iron-sulfur (Fe-S) centers, to quinones in the respiratory chain. The immediate electron acceptor for the enzyme in this species is believed to be ubiquinone. Couples the redox reaction to proton translocation (for every two electrons transferred, four hydrogen ions are translocated across the cytoplasmic membrane), and thus conserves the redox energy in a proton gradient. The protein is NADH-quinone oxidoreductase subunit D 1 of Anaeromyxobacter dehalogenans (strain 2CP-C).